Consider the following 314-residue polypeptide: Porphobilinogen deaminase (314 aa).

An S-(dipyrrolylmethanemethyl)cysteine modification is found at C241.

It belongs to the HMBS family. In terms of assembly, monomer. The cofactor is dipyrromethane.

It catalyses the reaction 4 porphobilinogen + H2O = hydroxymethylbilane + 4 NH4(+). It participates in porphyrin-containing compound metabolism; protoporphyrin-IX biosynthesis; coproporphyrinogen-III from 5-aminolevulinate: step 2/4. The protein operates within porphyrin-containing compound metabolism; chlorophyll biosynthesis. Tetrapolymerization of the monopyrrole PBG into the hydroxymethylbilane pre-uroporphyrinogen in several discrete steps. This is Porphobilinogen deaminase from Chloroherpeton thalassium (strain ATCC 35110 / GB-78).